The chain runs to 405 residues: Cytochrome P450 130 (405 aa).

Substrate-binding residues include Asp93 and His97. Heme is bound by residues Arg101, Gly243, Arg295, Tyr318, Ser348, His352, and Cys354.

The protein belongs to the cytochrome P450 family. In terms of assembly, homodimer. Heme is required as a cofactor.

The protein is Cytochrome P450 130 (cyp130) of Mycobacterium tuberculosis (strain CDC 1551 / Oshkosh).